Reading from the N-terminus, the 108-residue chain is RNA silencing suppressor (108 aa).

The basic stretch occupies residues 47–50 (RRRR). The C4-type zinc-finger motif lies at 57–78 (CHRCYRLWPPTVFTTRCDNKHC).

It belongs to the carlaviruses nucleic acid-binding protein family.

In terms of biological role, suppressor of viral-induced RNA silencing. Increases the accumulation of viral RNA and enhances viral cell-to-cell movement by inhibiting RNA silencing. The polypeptide is RNA silencing suppressor (Solanum tuberosum (Potato)).